We begin with the raw amino-acid sequence, 126 residues long: Holo-[acyl-carrier-protein] synthase (126 aa).

Asp-8 and Glu-57 together coordinate Mg(2+).

The protein belongs to the P-Pant transferase superfamily. AcpS family. Mg(2+) serves as cofactor.

Its subcellular location is the cytoplasm. It carries out the reaction apo-[ACP] + CoA = holo-[ACP] + adenosine 3',5'-bisphosphate + H(+). In terms of biological role, transfers the 4'-phosphopantetheine moiety from coenzyme A to a Ser of acyl-carrier-protein. The protein is Holo-[acyl-carrier-protein] synthase of Geobacter sulfurreducens (strain ATCC 51573 / DSM 12127 / PCA).